The sequence spans 369 residues: MLYSFHPYLKYFALLGLVPWSESCAQSKFVQKVYSAILIILNAVHFGISIYFPQSAELFLSLMVNVIVFVARIVCVTVIILQVMVHYDDYFRFCREMKYLGLRLQCELKIHVGRLKWQSYAKILALGIGFLVTVLPSIYVALSGSLLYFWSSLLSILIIRMQFVLVLLNVELLGHHVSLLGIRLQNVLECHLMGANCTLDGNANRLCSLEFLLALKQSHMQLHYLFTHFNDLFGWSILGTYVVLFSDSTVNIYWTQQVLVEVYEYKYLYATFSVFVPSFFNILVFCRCGEFCQRQSVLIGSYLRNLSCHPSIGRETSYKDLLMEFILQVEQNVLAINAEGFMSTDNSLLMSILAAKVTYLIVLMQFSSV.

The Cytoplasmic portion of the chain corresponds to 1 to 32 (MLYSFHPYLKYFALLGLVPWSESCAQSKFVQK). The helical transmembrane segment at 33-53 (VYSAILIILNAVHFGISIYFP) threads the bilayer. Residues 54 to 59 (QSAELF) are Extracellular-facing. The chain crosses the membrane as a helical span at residues 60 to 80 (LSLMVNVIVFVARIVCVTVII). At 81–122 (LQVMVHYDDYFRFCREMKYLGLRLQCELKIHVGRLKWQSYAK) the chain is on the cytoplasmic side. Residues 123–143 (ILALGIGFLVTVLPSIYVALS) traverse the membrane as a helical segment. The Extracellular segment spans residues 144–147 (GSLL). The chain crosses the membrane as a helical span at residues 148–168 (YFWSSLLSILIIRMQFVLVLL). Residues 169 to 224 (NVELLGHHVSLLGIRLQNVLECHLMGANCTLDGNANRLCSLEFLLALKQSHMQLHY) lie on the Cytoplasmic side of the membrane. A helical transmembrane segment spans residues 225 to 245 (LFTHFNDLFGWSILGTYVVLF). The Extracellular segment spans residues 246–265 (SDSTVNIYWTQQVLVEVYEY). Residues 266 to 286 (KYLYATFSVFVPSFFNILVFC) form a helical membrane-spanning segment. Residues 287-348 (RCGEFCQRQS…EGFMSTDNSL (62 aa)) lie on the Cytoplasmic side of the membrane. A helical transmembrane segment spans residues 349 to 368 (LMSILAAKVTYLIVLMQFSS). Position 369 (Val369) is a topological domain, extracellular.

The protein belongs to the insect chemoreceptor superfamily. Gustatory receptor (GR) family. Gr2a subfamily. Expressed in the adult labellar chemosensory neurons and in abdominal ganglions. In larvae, is expressed in neurons of the dorsal and posterior pharyngeal sense organs.

It is found in the cell membrane. In terms of biological role, probable gustatory receptor which mediates acceptance or avoidance behavior, depending on its substrates. Has also atypical sensory function in organ not limited to conventional taste sensing like abdominal ganglions. This chain is Putative gustatory receptor 39b (Gr39b), found in Drosophila melanogaster (Fruit fly).